A 269-amino-acid chain; its full sequence is 3-methyl-2-oxobutanoate hydroxymethyltransferase (269 aa).

Residues D50 and D89 each contribute to the Mg(2+) site. Residues 50–51 (DS), D89, and K118 contribute to the 3-methyl-2-oxobutanoate site. E120 is a Mg(2+) binding site. Catalysis depends on E187, which acts as the Proton acceptor.

Belongs to the PanB family. As to quaternary structure, homodecamer; pentamer of dimers. Mg(2+) is required as a cofactor.

The protein resides in the cytoplasm. It catalyses the reaction 3-methyl-2-oxobutanoate + (6R)-5,10-methylene-5,6,7,8-tetrahydrofolate + H2O = 2-dehydropantoate + (6S)-5,6,7,8-tetrahydrofolate. It participates in cofactor biosynthesis; (R)-pantothenate biosynthesis; (R)-pantoate from 3-methyl-2-oxobutanoate: step 1/2. In terms of biological role, catalyzes the reversible reaction in which hydroxymethyl group from 5,10-methylenetetrahydrofolate is transferred onto alpha-ketoisovalerate to form ketopantoate. This Aliarcobacter butzleri (strain RM4018) (Arcobacter butzleri) protein is 3-methyl-2-oxobutanoate hydroxymethyltransferase.